The following is a 402-amino-acid chain: Phosphoglycerate kinase (402 aa).

Substrate contacts are provided by residues 24 to 26 (DFN), Arg40, 63 to 66 (HFGR), Arg122, and Arg155. Residues Lys206, Gly297, Glu328, and 357-360 (GGDS) each bind ATP.

Belongs to the phosphoglycerate kinase family. As to quaternary structure, monomer.

The protein localises to the cytoplasm. The enzyme catalyses (2R)-3-phosphoglycerate + ATP = (2R)-3-phospho-glyceroyl phosphate + ADP. The protein operates within carbohydrate degradation; glycolysis; pyruvate from D-glyceraldehyde 3-phosphate: step 2/5. The chain is Phosphoglycerate kinase from Synechococcus sp. (strain RCC307).